The sequence spans 56 residues: Large ribosomal subunit protein bL33 (56 aa).

It belongs to the bacterial ribosomal protein bL33 family.

The protein is Large ribosomal subunit protein bL33 (rpmG) of Treponema pallidum (strain Nichols).